A 485-amino-acid chain; its full sequence is Amyloid beta A4 precursor protein-binding family B member 1-interacting protein (485 aa).

A compositionally biased stretch (polar residues) spans 84–107 (QAQKTSGNQQSVVTQPSTGTNNDF). The interval 84–157 (QAQKTSGNQQ…LSQEEQEARA (74 aa)) is disordered. Pro residues predominate over residues 125 to 147 (LPPPPPAPDLDLPPPPPPPPPEP). The 88-residue stretch at 175 to 262 (KKLVVKVHMY…KVLFLEKKEK (88 aa)) folds into the Ras-associating domain. Residues 305–414 (VPELEGALYL…WVTGIRIAKY (110 aa)) enclose the PH domain.

It belongs to the MRL family.

Its subcellular location is the cell membrane. The protein localises to the cytoplasm. It localises to the cytoskeleton. Appears to function in the signal transduction from Ras activation to actin cytoskeletal remodeling. The polypeptide is Amyloid beta A4 precursor protein-binding family B member 1-interacting protein (APBB1IP) (Gallus gallus (Chicken)).